Here is a 361-residue protein sequence, read N- to C-terminus: MTVVVGVLQIDDMGKKSSFASWWKQLRVKKSDDNKLFGLSLTRALEVSKVAIFLTRRDGEKVFYGYIPAVVAKCGFFLKQNATQVKGIFRVNGSSKRIQILQKAFSTGPDYGRSFDWEGYTVHDAANVFRRFINLMPEHVIPLEYYERFREPMTIPNLTDNERVEMYRRRIDELPIPNRQLLLYLLDLLSVFAMNSSKNLMTADNLAAIFQPGILSHPDHEVYSKDYQISQTALLFLINHQGSFIKTIPLSSLPPLVAAPTSPNTSSTLITQSAAPTPIASTSIRINSFNPRNGSIKRWRSFSRHSSATYSNSPSSNFSNMKSSEVDPGSPPRIKSRSYSLSRSSSMKLFHTLDRRRENRM.

Residues 52-245 (IFLTRRDGEK…FLINHQGSFI (194 aa)) form the Rho-GAP domain. Low complexity predominate over residues 306-323 (SSATYSNSPSSNFSNMKS). Positions 306-345 (SSATYSNSPSSNFSNMKSSEVDPGSPPRIKSRSYSLSRSS) are disordered.

It localises to the membrane. Functionally, GTPase-activating protein for Rho1. Has a role in the negative regulation of (1-3)beta-D-glucan synthase activity and cell integrity. The chain is Rho-GTPase-activating protein 5 (rga5) from Schizosaccharomyces pombe (strain 972 / ATCC 24843) (Fission yeast).